We begin with the raw amino-acid sequence, 348 residues long: 3-isopropylmalate dehydrogenase (348 aa).

Residue 76–87 (GPKWTDPNNRPE) participates in NAD(+) binding. The substrate site is built by Arg-94, Arg-104, Arg-132, and Asp-217. Residues Asp-217, Asp-241, and Asp-245 each coordinate Mg(2+). Position 275-287 (275-287 (GSAPDIAGKNVAN)) interacts with NAD(+).

It belongs to the isocitrate and isopropylmalate dehydrogenases family. LeuB type 1 subfamily. In terms of assembly, homodimer. It depends on Mg(2+) as a cofactor. The cofactor is Mn(2+).

The protein localises to the cytoplasm. It catalyses the reaction (2R,3S)-3-isopropylmalate + NAD(+) = 4-methyl-2-oxopentanoate + CO2 + NADH. The protein operates within amino-acid biosynthesis; L-leucine biosynthesis; L-leucine from 3-methyl-2-oxobutanoate: step 3/4. In terms of biological role, catalyzes the oxidation of 3-carboxy-2-hydroxy-4-methylpentanoate (3-isopropylmalate) to 3-carboxy-4-methyl-2-oxopentanoate. The product decarboxylates to 4-methyl-2 oxopentanoate. In Staphylococcus aureus (strain NCTC 8325 / PS 47), this protein is 3-isopropylmalate dehydrogenase.